The following is a 382-amino-acid chain: Mannitol-1-phosphate 5-dehydrogenase (382 aa).

3–14 serves as a coordination point for NAD(+); that stretch reads AVHFGAGNIGRG.

The protein belongs to the mannitol dehydrogenase family.

The enzyme catalyses D-mannitol 1-phosphate + NAD(+) = beta-D-fructose 6-phosphate + NADH + H(+). The chain is Mannitol-1-phosphate 5-dehydrogenase from Aliivibrio salmonicida (strain LFI1238) (Vibrio salmonicida (strain LFI1238)).